The primary structure comprises 72 residues: Large ribosomal subunit protein uL29 (72 aa).

This sequence belongs to the universal ribosomal protein uL29 family.

The sequence is that of Large ribosomal subunit protein uL29 from Microcystis aeruginosa (strain NIES-843 / IAM M-2473).